We begin with the raw amino-acid sequence, 318 residues long: MRHFLDFEKPVAELEAKIEELRRMTDPGELNIAEEVTLLSDKAERQLRTLYGRLSPWQKTQVARHPERPKARDVIAGLITEFTPLAGDRGFGEDAAIVAGPGRFKGEPVMVIAIEKGWDLESRLKHNFGSPRPEGYRKARRLIEMAGRFGLPVLSFVDTSGAYPGVDAEARGQAEAIARGIDACLAAPVPFIATIIGEGGSGGAIAIAAADTVLMFEHAIYSVISPEGCAAILWEDRANAAQAAEAMKITAQDLKRLGIIDRIVPEPLGGAHRDPQAAITALGAAIAETLPGLAALAPEALRAKRREKFLAIGQTLPV.

A CoA carboxyltransferase C-terminal domain is found at 39-292; the sequence is LSDKAERQLR…GAAIAETLPG (254 aa).

The protein belongs to the AccA family. Acetyl-CoA carboxylase is a heterohexamer composed of biotin carboxyl carrier protein (AccB), biotin carboxylase (AccC) and two subunits each of ACCase subunit alpha (AccA) and ACCase subunit beta (AccD).

The protein localises to the cytoplasm. It catalyses the reaction N(6)-carboxybiotinyl-L-lysyl-[protein] + acetyl-CoA = N(6)-biotinyl-L-lysyl-[protein] + malonyl-CoA. The protein operates within lipid metabolism; malonyl-CoA biosynthesis; malonyl-CoA from acetyl-CoA: step 1/1. Functionally, component of the acetyl coenzyme A carboxylase (ACC) complex. First, biotin carboxylase catalyzes the carboxylation of biotin on its carrier protein (BCCP) and then the CO(2) group is transferred by the carboxyltransferase to acetyl-CoA to form malonyl-CoA. The sequence is that of Acetyl-coenzyme A carboxylase carboxyl transferase subunit alpha from Acidiphilium cryptum (strain JF-5).